The chain runs to 571 residues: Optineurin (571 aa).

2 disordered regions span residues 1–32 (MSHQPLSCLTEKGDSPSESTGNGPPHLAHPNL) and 100–144 (LSHE…DQLR). Residues 38–170 (EELLQQMKEL…VSELQLKLNS (133 aa)) adopt a coiled-coil conformation. Residues 58–209 (MKLNNQAMKG…GPTRTVSIGT (152 aa)) form an interaction with Rab8 region. Composition is skewed to basic and acidic residues over residues 100–123 (LSHENEKLKEELGKLKGKSERSSE) and 130–143 (RLPRAEAEQEKDQL). Positions 176 to 181 (DSFVEI) match the LIR motif. Ser-177 carries the phosphoserine; by TBK1 modification. The segment covering 186-197 (GEAEGSVKEIKH) has biased composition (basic and acidic residues). 2 disordered regions span residues 186 to 210 (GEAEGSVKEIKHSPGPTRTVSIGTS) and 255 to 291 (VSDFEKKASNRSEIETQTEGSTEKENEEEKGPETVGS). Phosphoserine is present on Ser-198. The segment covering 201 to 210 (PTRTVSIGTS) has biased composition (polar residues). A coiled-coil region spans residues 233–502 (CLREGNQKVE…LLKENDAFED (270 aa)). 2 stretches are compositionally biased toward basic and acidic residues: residues 255 to 268 (VSDFEKKASNRSEI) and 275 to 286 (STEKENEEEKGP). Position 336 is a phosphoserine (Ser-336). Positions 405–571 (TRKESEKVDR…LQIHVMDCII (167 aa)) are interaction with HD. Residues 406 to 514 (RKESEKVDRA…RQSLMEMQSR (109 aa)) are interaction with MYO6. The short motif at 468-473 (DFHAER) is the UBAN element. Phosphoserine is present on Ser-520. The CCHC NOA-type zinc finger occupies 541 to 571 (QRNIPIHSCPKCGEVLPDIDTLQIHVMDCII). Cys-549, Cys-552, His-565, and Cys-569 together coordinate Zn(2+).

In terms of assembly, self-associates. Interacts with HD. Interacts with GTF3A. Interacts with MYO6. Interacts (via UBAN) with ubiquitinated TFRC. Interacts with GTP-bound Rab8 (RAB8A and/or RAB8B). Interacts with TBC1D17. Interacts with TBK1. Interacts with TRAF3. Binds to linear ubiquitin chains. Interacts with LC3 family members MAP1LC3A, MAP1LC3B, GABARAP, GABARAPL1 and GABARAPL2; OPTN phosphorylation increases the association (at least with MAP1LC3B). Interacts with RAB12; the interaction may be indirect. Interacts with TBK1; this interaction leads to the Golgi localization of TBK1 and its subsequent activation. Interacts with palmitoyltransferase ZDHHC17/HIP14; the interaction does not lead to palmitoylation of OPTN. Interacts with CYLD. Interacts with TOM1; the interaction is indirect and is mediated by MYO6, which acts as a bridge between TOM1 and OPTN. Interacts with USP12; the interaction is independent of USP12 deubiquitinase activity and may be involved in regulation of autophagic flux. In terms of processing, phosphorylated by TBK1, leading to restrict bacterial proliferation in case of infection.

The protein localises to the cytoplasm. The protein resides in the perinuclear region. It localises to the golgi apparatus. Its subcellular location is the trans-Golgi network. It is found in the cytoplasmic vesicle. The protein localises to the autophagosome. The protein resides in the recycling endosome. In terms of biological role, plays an important role in the maintenance of the Golgi complex, in membrane trafficking, in exocytosis, through its interaction with myosin VI and Rab8. Links myosin VI to the Golgi complex and plays an important role in Golgi ribbon formation. Negatively regulates the induction of IFNB in response to RNA virus infection. Plays a neuroprotective role in the eye and optic nerve. Probably part of the TNF-alpha signaling pathway that can shift the equilibrium toward induction of cell death. May act by regulating membrane trafficking and cellular morphogenesis via a complex that contains Rab8 and huntingtin (HD). Mediates the interaction of Rab8 with the probable GTPase-activating protein TBC1D17 during Rab8-mediated endocytic trafficking, such as that of transferrin receptor (TFRC/TfR); regulates Rab8 recruitment to tubules emanating from the endocytic recycling compartment. Autophagy receptor that interacts directly with both the cargo to become degraded and an autophagy modifier of the MAP1 LC3 family; targets ubiquitin-coated bacteria (xenophagy) and appears to function in the same pathway as SQSTM1 and CALCOCO2/NDP52. In Macaca fascicularis (Crab-eating macaque), this protein is Optineurin (OPTN).